The following is a 193-amino-acid chain: Ribosome maturation factor RimM (193 aa).

One can recognise a PRC barrel domain in the interval 100–173 (DDEFYYADLE…TLLIDPLAAG (74 aa)).

This sequence belongs to the RimM family. Binds ribosomal protein uS19.

It is found in the cytoplasm. In terms of biological role, an accessory protein needed during the final step in the assembly of 30S ribosomal subunit, possibly for assembly of the head region. Essential for efficient processing of 16S rRNA. May be needed both before and after RbfA during the maturation of 16S rRNA. It has affinity for free ribosomal 30S subunits but not for 70S ribosomes. This is Ribosome maturation factor RimM from Rhizobium etli (strain CIAT 652).